Consider the following 182-residue polypeptide: Flightin (182 aa).

Over residues methionine 1–glutamate 15 the composition is skewed to acidic residues. A disordered region spans residues methionine 1–arginine 76.

In terms of processing, several forms of flightin are thought to be produced through post-translational modifications, possibly by phosphorylation. As to expression, found only in indirect flight muscles (IFM).

Possibly involved in the regulation of flight muscles contraction, possibly by modulating actin-myosin interaction. This Drosophila melanogaster (Fruit fly) protein is Flightin (fln).